A 352-amino-acid chain; its full sequence is Thrombopoietin (352 aa).

The N-terminal stretch at 1 to 23 is a signal peptide; it reads MELTELLLVVMLLLTARLDPCLP. 2 disulfide bridges follow: C28–C172 and C50–C106. 5 N-linked (GlcNAc...) asparagine glycosylation sites follow: N185, N197, N206, N234, and N255. Positions 233 to 245 are enriched in polar residues; sequence LNQTSRSLNQTPG. Disordered regions lie at residues 233–259 and 292–352; these read LNQT…GTHG and YSPS…SQEE. A compositionally biased stretch (pro residues) spans 311–327; it reads PTSPTPQNPLQPPPPDP. Residues N332 and N347 are each glycosylated (N-linked (GlcNAc...) asparagine).

It belongs to the EPO/TPO family.

It localises to the secreted. In terms of biological role, lineage-specific cytokine affecting the proliferation and maturation of megakaryocytes from their committed progenitor cells. It acts at a late stage of megakaryocyte development. It may be the major physiological regulator of circulating platelets. The protein is Thrombopoietin (THPO) of Canis lupus familiaris (Dog).